Here is a 48-residue protein sequence, read N- to C-terminus: Sperm protamine P1 (48 aa).

The protein belongs to the protamine P1 family. In terms of tissue distribution, testis.

Its subcellular location is the nucleus. The protein resides in the chromosome. Its function is as follows. Protamines substitute for histones in the chromatin of sperm during the haploid phase of spermatogenesis. They compact sperm DNA into a highly condensed, stable and inactive complex. In Eptesicus fuscus (Big brown bat), this protein is Sperm protamine P1 (PRM1).